The primary structure comprises 320 residues: 4-hydroxy-3-methylbut-2-enyl diphosphate reductase 2 (320 aa).

Cys18 serves as a coordination point for [4Fe-4S] cluster. Residues His47 and His81 each coordinate (2E)-4-hydroxy-3-methylbut-2-enyl diphosphate. Positions 47 and 81 each coordinate dimethylallyl diphosphate. Residues His47 and His81 each coordinate isopentenyl diphosphate. Residue Cys103 coordinates [4Fe-4S] cluster. Position 131 (His131) interacts with (2E)-4-hydroxy-3-methylbut-2-enyl diphosphate. Position 131 (His131) interacts with dimethylallyl diphosphate. His131 provides a ligand contact to isopentenyl diphosphate. Residue Glu133 is the Proton donor of the active site. Thr172 contacts (2E)-4-hydroxy-3-methylbut-2-enyl diphosphate. Cys202 lines the [4Fe-4S] cluster pocket. Residues Ser230, Ser231, Asn232, and Ser275 each coordinate (2E)-4-hydroxy-3-methylbut-2-enyl diphosphate. Positions 230, 231, 232, and 275 each coordinate dimethylallyl diphosphate. The isopentenyl diphosphate site is built by Ser230, Ser231, Asn232, and Ser275.

This sequence belongs to the IspH family. It depends on [4Fe-4S] cluster as a cofactor.

It carries out the reaction isopentenyl diphosphate + 2 oxidized [2Fe-2S]-[ferredoxin] + H2O = (2E)-4-hydroxy-3-methylbut-2-enyl diphosphate + 2 reduced [2Fe-2S]-[ferredoxin] + 2 H(+). It catalyses the reaction dimethylallyl diphosphate + 2 oxidized [2Fe-2S]-[ferredoxin] + H2O = (2E)-4-hydroxy-3-methylbut-2-enyl diphosphate + 2 reduced [2Fe-2S]-[ferredoxin] + 2 H(+). The protein operates within isoprenoid biosynthesis; dimethylallyl diphosphate biosynthesis; dimethylallyl diphosphate from (2E)-4-hydroxy-3-methylbutenyl diphosphate: step 1/1. Its pathway is isoprenoid biosynthesis; isopentenyl diphosphate biosynthesis via DXP pathway; isopentenyl diphosphate from 1-deoxy-D-xylulose 5-phosphate: step 6/6. Functionally, catalyzes the conversion of 1-hydroxy-2-methyl-2-(E)-butenyl 4-diphosphate (HMBPP) into a mixture of isopentenyl diphosphate (IPP) and dimethylallyl diphosphate (DMAPP). Acts in the terminal step of the DOXP/MEP pathway for isoprenoid precursor biosynthesis. The sequence is that of 4-hydroxy-3-methylbut-2-enyl diphosphate reductase 2 from Rhodopseudomonas palustris (strain ATCC BAA-98 / CGA009).